The primary structure comprises 399 residues: MAGICCGVVGETEPAAPVDSTSRASLRRRLDLLPSIKIVADSAVAPPLENCRKRQKRETVVLSTLPGNLDLDSNVRSENKKARSAVTNSNSVTEAESFFSDVPKIGTTSVCGRRRDMEDAVSIHPSFLQRNSENHHFYGVFDGHGCSHVAEKCRERLHDIVKKEVEVMASDEWTETMVKSFQKMDKEVSQRECNLVVNGATRSMKNSCRCELQSPQCDAVGSTAVVSVVTPEKIIVSNCGDSRAVLCRNGVAIPLSVDHKPDRPDELIRIQQAGGRVIYWDGARVLGVLAMSRAIGDNYLKPYVIPDPEVTVTDRTDEDECLILASDGLWDVVPNETACGVARMCLRGAGAGDDSDAAHNACSDAALLLTKLALARQSSDNVSVVVVDLRKRRNNQASS.

In terms of domain architecture, PPM-type phosphatase spans 104–389; the sequence is KIGTTSVCGR…DNVSVVVVDL (286 aa). Residues aspartate 142 and glycine 143 each coordinate Mn(2+). Zn(2+) is bound by residues cysteine 146, histidine 148, cysteine 208, and cysteine 210. Residues aspartate 327, aspartate 331, and aspartate 380 each coordinate Mn(2+).

The protein belongs to the PP2C family. In terms of assembly, interacts with AKT2/AKT3. Interacts with ABA-bounded PYR1, PYL1, PYL2, PYL3, PYL4, PYL9 and PYL12, and with free PYL2, PYL3, PYL4 and PYL13. Binds to and inactivates SLAC1 and SRK2E. The inactivation of SRK2E does not require phosphatase activity. Interacts with CBL1, CBL2, CBL3, CBL5, and CBL7, but not CBL4, CBL6, and CBL9. Interacts with RGLG1 and RGLG5. Interacts with KIN10. Mg(2+) serves as cofactor. It depends on Mn(2+) as a cofactor. In terms of processing, ubiquitinated by RGLG1 and RGLG5 in response to abscisic acid (ABA). Ubiquitination of PP2CA leads to its degradation by the proteasome. As to expression, mostly expressed in seeds and leaves, and, to a lower extent, in roots, stems, and flowers, particularly in siliques. Essentially found in the phloem.

The enzyme catalyses O-phospho-L-seryl-[protein] + H2O = L-seryl-[protein] + phosphate. The catalysed reaction is O-phospho-L-threonyl-[protein] + H2O = L-threonyl-[protein] + phosphate. Repressed by PYR/PYL/RCAR ABA receptors in an ABA-dependent manner. Major negative regulator of abscisic acid (ABA) responses during seed germination and cold acclimation. Confers insensitivity to ABA. Modulates negatively the AKT2/3 activity, which mediates K(+) transport and membrane polarization during stress situations, probably by dephosphorylation. Prevents stomata closure by inactivating the S-type anion efflux channel SLAC1 and its activator SRK2E. Represses KIN10 activity by the specific dephosphorylation of its T-loop Thr-198, leading to a poststress inactivation of SnRK1 signaling. This is Protein phosphatase 2C 37 (PP2CA) from Arabidopsis thaliana (Mouse-ear cress).